Reading from the N-terminus, the 125-residue chain is MNSLEQAEDLKAFERRLTEYVSCLQPATGRWRMILIVVSVCTATGAWNWLIDPDTQKVSFFSSLWNHPFFTISCVTLIGLFFAGIHKRVVAPSIIAARCRTVLAEYNMSCDDTGKLILKPRPHIQ.

2 helical membrane-spanning segments follow: residues 33–53 (MILIVVSVCTATGAWNWLIDP) and 65–85 (WNHPFFTISCVTLIGLFFAGI).

The protein belongs to the CNEP1R1 family.

The protein resides in the nucleus membrane. It is found in the cytoplasm. In terms of biological role, may form with the serine/threonine protein phosphatase ctdnep1 an active complex dephosphorylating and activating lipins. Lipins are phosphatidate phosphatases that catalyze the conversion of phosphatidic acid to diacylglycerol and control the metabolism of fatty acids at different levels. May indirectly modulate the lipid composition of nuclear and/or endoplasmic reticulum membranes and be required for proper nuclear membrane morphology and/or dynamics. May also indirectly regulate the production of lipid droplets and triacylglycerol. This is Nuclear envelope phosphatase-regulatory subunit 1 (cnep1r1) from Danio rerio (Zebrafish).